The primary structure comprises 570 residues: MKASELFFPTLREVPSEAEVLSHQLLLRAGFIRKATAGVYSYLPLANRVLKKIMNIVREEMDRAGGQEVILPIIQPAELWKKSGRWEVYGDEMFRLKDRHNRDFALGPTHEEIITTLVDADVHSYRHLPLLLYQIQNKYRDEIRPRFGLMRGREFIMKDLYSFDIDEEGLDISYHKMYEAYNRIFQRLKLQYRVVEADSGAIGGNESHEFMVLAENGEAEIVYCKNCDYGANTEKAVCSLEEPKVTEEEQLELEKVHTPGQRTIQDLVDYMNIPKEKQIKTLIYYADEELVAAIVRGDRELNEIKFKNVLGCNQLFMADETAVKQLCSAGFGSLGPVGLPLKTYIDLEVSQMKNFACGANEDDYHFINVNLGRDFTPAGINDIRNAVAGDSCPVCSAPLYSMRGIEVGHIFKLGTKYSEVLEANYLDQKGQEKPMVMGCYGIGISRTMAAAVEQSADENGIVWPLPITPFEVIIVPVNSKNEEQMQAAWSLYEEFKQEGLETIVDDRDERAGVKFKDADLIGIPLRITIGPRSLQEKQVEVKKRSDKDIELVPLDAVSSRVKLMLKEMSK.

The protein belongs to the class-II aminoacyl-tRNA synthetase family. ProS type 1 subfamily. As to quaternary structure, homodimer.

It localises to the cytoplasm. The catalysed reaction is tRNA(Pro) + L-proline + ATP = L-prolyl-tRNA(Pro) + AMP + diphosphate. Catalyzes the attachment of proline to tRNA(Pro) in a two-step reaction: proline is first activated by ATP to form Pro-AMP and then transferred to the acceptor end of tRNA(Pro). As ProRS can inadvertently accommodate and process non-cognate amino acids such as alanine and cysteine, to avoid such errors it has two additional distinct editing activities against alanine. One activity is designated as 'pretransfer' editing and involves the tRNA(Pro)-independent hydrolysis of activated Ala-AMP. The other activity is designated 'posttransfer' editing and involves deacylation of mischarged Ala-tRNA(Pro). The misacylated Cys-tRNA(Pro) is not edited by ProRS. This chain is Proline--tRNA ligase, found in Syntrophomonas wolfei subsp. wolfei (strain DSM 2245B / Goettingen).